Here is a 118-residue protein sequence, read N- to C-terminus: Secreted RxLR effector protein 143 (118 aa).

The first 18 residues, M1 to S18, serve as a signal peptide directing secretion. The span at D35 to G65 shows a compositional bias: basic and acidic residues. A disordered region spans residues D35–I66. The short motif at R49–R64 is the RxLR-dEER element.

This sequence belongs to the RxLR effector family.

It is found in the secreted. The protein resides in the host cell membrane. Functionally, secreted effector that completely suppresses the host cell death induced by cell death-inducing proteins. The sequence is that of Secreted RxLR effector protein 143 from Plasmopara viticola (Downy mildew of grapevine).